A 621-amino-acid polypeptide reads, in one-letter code: MBT domain-containing protein 1 (621 aa).

The segment covering 1 to 21 (MEKTKDPADRSSRSERKRRDS) has biased composition (basic and acidic residues). A disordered region spans residues 1-55 (MEKTKDPADRSSRSERKRRDSFGMFDGYDSCSEDTSSSSSSDESEEEVAPLPSSL). A compositionally biased stretch (low complexity) spans 29–41 (DSCSEDTSSSSSS). An FCS-type zinc finger spans residues 68 to 103 (PDGKSGMATCEMCGMVGVRDAFYSKTKRFCSVSCSR). The Zn(2+) site is built by cysteine 77, cysteine 80, cysteine 97, and cysteine 101. MBT repeat units follow at residues 164-268 (FSWG…LVPP), 276-373 (TNWK…IGHR), 374-479 (FKRT…LTPP), and 487-583 (FKWF…LQPP). A disordered region spans residues 581–621 (QPPAPQSNKDGQSNVSKQKKKSKSQPYKGHKKNFRKPGNRP). Basic residues predominate over residues 597–621 (KQKKKSKSQPYKGHKKNFRKPGNRP).

Monomer. Component of the NuA4 histone acetyltransferase complex.

The protein resides in the nucleus. The protein localises to the chromosome. Functionally, chromatin reader component of the NuA4 histone acetyltransferase complex, a multiprotein complex involved in transcriptional activation of select genes principally by acetylation of nucleosomal histones H4 and H2A. The NuA4 complex plays a direct role in repair of DNA double-strand breaks (DSBs) by promoting homologous recombination (HR). MBTD1 specifically recognizes and binds monomethylated and dimethylated 'Lys-20' on histone H4 (H4K20me1 and H4K20me2, respectively). In the NuA4 complex, MBTD1 promotes recruitment of the complex to H4K20me marks by competing with TP53BP1 for binding to H4K20me. Following recruitment to H4K20me at DNA breaks, the NuA4 complex catalyzes acetylation of 'Lys-15' on histone H2A (H2AK15), blocking the ubiquitination mark required for TP53BP1 localization at DNA breaks, thereby promoting homologous recombination (HR). The chain is MBT domain-containing protein 1 from Xenopus laevis (African clawed frog).